The following is a 1416-amino-acid chain: DNA-directed RNA polymerase subunit beta (1416 aa).

It belongs to the RNA polymerase beta chain family. In terms of assembly, in plastids the minimal PEP RNA polymerase catalytic core is composed of four subunits: alpha, beta, beta', and beta''. When a (nuclear-encoded) sigma factor is associated with the core the holoenzyme is formed, which can initiate transcription.

The protein localises to the plastid. It is found in the chloroplast. It catalyses the reaction RNA(n) + a ribonucleoside 5'-triphosphate = RNA(n+1) + diphosphate. Its function is as follows. DNA-dependent RNA polymerase catalyzes the transcription of DNA into RNA using the four ribonucleoside triphosphates as substrates. The sequence is that of DNA-directed RNA polymerase subunit beta from Oltmannsiellopsis viridis (Marine flagellate).